Here is a 73-residue protein sequence, read N- to C-terminus: MKADTHPDYHIIDVKMTDGTVVQMKSTWGKEGDQLSLDIDPSAHPAWTGGSSRLLDTGGRVSKFKNKYAGLGF.

This sequence belongs to the bacterial ribosomal protein bL31 family. Type A subfamily. As to quaternary structure, part of the 50S ribosomal subunit.

In terms of biological role, binds the 23S rRNA. In Roseobacter denitrificans (strain ATCC 33942 / OCh 114) (Erythrobacter sp. (strain OCh 114)), this protein is Large ribosomal subunit protein bL31 (rpmE).